We begin with the raw amino-acid sequence, 169 residues long: Ribosome-binding factor A (169 aa).

Positions 124–169 are disordered; the sequence is AGAKHAGDADPYKSDIPEDVEIDEDDFDEEDEDLIDDEELDEDGNK. Basic and acidic residues predominate over residues 128–139; the sequence is HAGDADPYKSDI. The span at 140–169 shows a compositional bias: acidic residues; sequence PEDVEIDEDDFDEEDEDLIDDEELDEDGNK.

It belongs to the RbfA family. Monomer. Binds 30S ribosomal subunits, but not 50S ribosomal subunits or 70S ribosomes.

It localises to the cytoplasm. One of several proteins that assist in the late maturation steps of the functional core of the 30S ribosomal subunit. Associates with free 30S ribosomal subunits (but not with 30S subunits that are part of 70S ribosomes or polysomes). Required for efficient processing of 16S rRNA. May interact with the 5'-terminal helix region of 16S rRNA. The protein is Ribosome-binding factor A of Arthrobacter sp. (strain FB24).